The primary structure comprises 1191 residues: Laminin subunit gamma-2 (1191 aa).

An N-terminal signal peptide occupies residues 1–21 (MPALWLSCCLGVALLLPAAQA). 12 disulfides stabilise this stretch: cysteine 28-cysteine 37, cysteine 30-cysteine 53, cysteine 56-cysteine 65, cysteine 68-cysteine 81, cysteine 84-cysteine 96, cysteine 86-cysteine 102, cysteine 104-cysteine 113, cysteine 116-cysteine 128, cysteine 139-cysteine 150, cysteine 141-cysteine 155, cysteine 157-cysteine 166, and cysteine 169-cysteine 184. Laminin EGF-like domains follow at residues 28 to 83 (CDCN…RCLP), 84 to 130 (CNCH…GCTR), and 139 to 186 (CDCD…GCTQ). The Laminin EGF-like 4; first part domain maps to 187 to 196 (CFCYGHSASC). Residues 213-381 (QDVDGWKAVQ…SGAPAPWVER (169 aa)) enclose the Laminin IV type A domain. N-linked (GlcNAc...) asparagine glycans are attached at residues asparagine 342 and asparagine 362. In terms of domain architecture, Laminin EGF-like 4; second part spans 382-415 (CVCPAGYKGQFCQECASGYKRDSARLGPFGACVP). Laminin EGF-like domains are found at residues 416 to 461 (CNCQ…SCKP), 462 to 516 (CPCH…PCQR), and 517 to 572 (CQCN…KCRA). 11 disulfides stabilise this stretch: cysteine 462/cysteine 470, cysteine 464/cysteine 481, cysteine 484/cysteine 493, cysteine 496/cysteine 514, cysteine 517/cysteine 531, cysteine 519/cysteine 538, cysteine 541/cysteine 550, cysteine 553/cysteine 570, cysteine 573/cysteine 585, cysteine 575/cysteine 591, and cysteine 593/cysteine 602. Residue asparagine 526 is glycosylated (N-linked (GlcNAc...) asparagine). The region spanning 573-602 (CNCSPMGSEPGECRGDGSCVCKPGFGGLNC) is the Laminin EGF-like 8; truncated domain. Residues 586-588 (RGD) carry the Cell attachment site motif. Residues 603-1191 (DHAALTSCPA…CYNTQALEQQ (589 aa)) form a domain II and I region. Coiled coils occupy residues 612–710 (ACYN…IRAL) and 759–786 (LAQEATRKADSHAESANAMKQLARETED). O-linked (Xyl...) (chondroitin sulfate) serine glycosylation occurs at serine 805. N-linked (GlcNAc...) asparagine glycosylation is present at asparagine 941. Residues 946–996 (EVENILKNLREFDLQVEDRKAEAEEAMKRLSSISQKVADASDKTQQAETAL) adopt a coiled-coil conformation. The N-linked (GlcNAc...) asparagine glycan is linked to asparagine 1032. The stretch at 1139–1178 (LMSDLEERVRRQRNHLHLLETSIDGILADVKNLENIRDNL) forms a coiled coil.

In terms of assembly, laminin is a complex glycoprotein, consisting of three different polypeptide chains (alpha, beta, gamma), which are bound to each other by disulfide bonds into a cross-shaped molecule comprising one long and three short arms with globules at each end. Gamma-2 is a subunit of laminin-5 (laminin-332 or epiligrin/kalinin/nicein). Binds to fibulin-1, fibulin-1c, fibulin-2 and nidogen. In terms of processing, O-glycosylated; contains chondroitin sulfate (CS). Epithelial cells of many tissues, particularly high levels in tongue, hair follicles and kidney. Basement membranes of the collecting tubules of kidney and pancreas.

The protein localises to the secreted. Its subcellular location is the extracellular space. It localises to the extracellular matrix. The protein resides in the basement membrane. Its function is as follows. Binding to cells via a high affinity receptor, laminin is thought to mediate the attachment, migration and organization of cells into tissues during embryonic development by interacting with other extracellular matrix components. The chain is Laminin subunit gamma-2 (Lamc2) from Mus musculus (Mouse).